Reading from the N-terminus, the 527-residue chain is Oviduct-specific glycoprotein (527 aa).

Positions 1 to 21 (MGKLLLWVGLVLVLKHHNGAA) are cleaved as a signal peptide. The GH18 domain maps to 22–385 (HKLVCYFANW…YMLNDLLLKA (364 aa)). A disulfide bond links C26 and C51. N62 carries N-linked (GlcNAc...) asparagine glycosylation. Chitin is bound by residues 71–72 (AR), 98–101 (GGWN), Y142, 211–214 (LSYD), and W355. 2 N-linked (GlcNAc...) asparagine glycosylation sites follow: N402 and N441. Positions 433-527 (TETHGRSDNM…MTLPSGKRSD (95 aa)) are disordered.

Belongs to the glycosyl hydrolase 18 family. In terms of tissue distribution, oviduct.

The protein localises to the cytoplasmic vesicle. It is found in the secretory vesicle. Functionally, binds to oocyte zona pellucida in vivo. May play a role in the fertilization process and/or early embryonic development. The polypeptide is Oviduct-specific glycoprotein (OVGP1) (Sus scrofa (Pig)).